We begin with the raw amino-acid sequence, 80 residues long: Sulfur carrier protein TusA (80 aa).

The active-site Cysteine persulfide intermediate is Cys-17.

The protein belongs to the sulfur carrier protein TusA family.

It is found in the cytoplasm. Functionally, sulfur carrier protein which probably makes part of a sulfur-relay system. This Pseudomonas putida (strain ATCC 47054 / DSM 6125 / CFBP 8728 / NCIMB 11950 / KT2440) protein is Sulfur carrier protein TusA.